Reading from the N-terminus, the 105-residue chain is U-scoloptoxin(10)-Sm3a (105 aa).

The N-terminal stretch at 1–23 is a signal peptide; the sequence is MYKFIFIFFTVFFLINIIEESXT.

This sequence belongs to the scoloptoxin-10 family. Post-translationally, contains 3 disulfide bonds. Expressed by the venom gland.

Its subcellular location is the secreted. In Scolopendra morsitans (Tanzanian blue ringleg centipede), this protein is U-scoloptoxin(10)-Sm3a.